The primary structure comprises 276 residues: SKA complex subunit 1 homolog (276 aa).

Positions 48-78 (VDVSLTAMEAQLQAVRRRLQEEREAFPKAKK) form a coiled coil.

The protein belongs to the SKA1 family.

This Oryza sativa subsp. indica (Rice) protein is SKA complex subunit 1 homolog.